Reading from the N-terminus, the 256-residue chain is Small ribosomal subunit protein uS2 (256 aa).

The protein belongs to the universal ribosomal protein uS2 family.

This Methylococcus capsulatus (strain ATCC 33009 / NCIMB 11132 / Bath) protein is Small ribosomal subunit protein uS2.